A 548-amino-acid polypeptide reads, in one-letter code: Chaperonin GroEL (548 aa).

ATP is bound by residues 30–33, Lys51, 87–91, Gly415, 479–481, and Asp495; these read TLGP, DGTTT, and NAA. Positions 525-548 are disordered; the sequence is PKEDKTSDASSSPAGGMGGMGGMM. A compositionally biased stretch (gly residues) spans 539–548; that stretch reads GGMGGMGGMM.

It belongs to the chaperonin (HSP60) family. As to quaternary structure, forms a cylinder of 14 subunits composed of two heptameric rings stacked back-to-back. Interacts with the co-chaperonin GroES.

Its subcellular location is the cytoplasm. The enzyme catalyses ATP + H2O + a folded polypeptide = ADP + phosphate + an unfolded polypeptide.. In terms of biological role, together with its co-chaperonin GroES, plays an essential role in assisting protein folding. The GroEL-GroES system forms a nano-cage that allows encapsulation of the non-native substrate proteins and provides a physical environment optimized to promote and accelerate protein folding. This is Chaperonin GroEL from Buchnera aphidicola subsp. Rhopalosiphum maidis.